The chain runs to 667 residues: Protein angel homolog 1 (667 aa).

Residues serine 77 and serine 105 each carry the phosphoserine modification.

The protein belongs to the CCR4/nocturin family.

This is Protein angel homolog 1 from Mus musculus (Mouse).